A 318-amino-acid chain; its full sequence is GTP cyclohydrolase MptA (318 aa).

Belongs to the GTP cyclohydrolase IV family. As to quaternary structure, homodimer. Requires Fe(2+) as cofactor.

The catalysed reaction is GTP + H2O = 7,8-dihydroneopterin 2',3'-cyclic phosphate + formate + diphosphate + H(+). It participates in cofactor biosynthesis; 5,6,7,8-tetrahydromethanopterin biosynthesis. Its function is as follows. Converts GTP to 7,8-dihydro-D-neopterin 2',3'-cyclic phosphate, the first intermediate in the biosynthesis of coenzyme methanopterin. This chain is GTP cyclohydrolase MptA, found in Methanosarcina mazei (strain ATCC BAA-159 / DSM 3647 / Goe1 / Go1 / JCM 11833 / OCM 88) (Methanosarcina frisia).